The primary structure comprises 492 residues: Glutamyl-tRNA(Gln) amidotransferase subunit A (492 aa).

Active-site charge relay system residues include K79 and S154. Catalysis depends on S178, which acts as the Acyl-ester intermediate.

It belongs to the amidase family. GatA subfamily. Heterotrimer of A, B and C subunits.

The catalysed reaction is L-glutamyl-tRNA(Gln) + L-glutamine + ATP + H2O = L-glutaminyl-tRNA(Gln) + L-glutamate + ADP + phosphate + H(+). Functionally, allows the formation of correctly charged Gln-tRNA(Gln) through the transamidation of misacylated Glu-tRNA(Gln) in organisms which lack glutaminyl-tRNA synthetase. The reaction takes place in the presence of glutamine and ATP through an activated gamma-phospho-Glu-tRNA(Gln). The polypeptide is Glutamyl-tRNA(Gln) amidotransferase subunit A (gatA) (Moraxella catarrhalis (Branhamella catarrhalis)).